We begin with the raw amino-acid sequence, 282 residues long: Large ribosomal subunit protein uL2 (282 aa).

2 disordered regions span residues Lys31–Ile54 and Leu223–Arg282. 2 stretches are compositionally biased toward basic residues: residues Thr34–Ile54 and Val270–Arg282.

This sequence belongs to the universal ribosomal protein uL2 family. As to quaternary structure, part of the 50S ribosomal subunit. Forms a bridge to the 30S subunit in the 70S ribosome.

Its function is as follows. One of the primary rRNA binding proteins. Required for association of the 30S and 50S subunits to form the 70S ribosome, for tRNA binding and peptide bond formation. It has been suggested to have peptidyltransferase activity; this is somewhat controversial. Makes several contacts with the 16S rRNA in the 70S ribosome. In Anaeromyxobacter dehalogenans (strain 2CP-1 / ATCC BAA-258), this protein is Large ribosomal subunit protein uL2.